We begin with the raw amino-acid sequence, 138 residues long: ATP synthase epsilon chain, chloroplastic (138 aa).

It belongs to the ATPase epsilon chain family. F-type ATPases have 2 components, CF(1) - the catalytic core - and CF(0) - the membrane proton channel. CF(1) has five subunits: alpha(3), beta(3), gamma(1), delta(1), epsilon(1). CF(0) has three main subunits: a, b and c.

It is found in the plastid. The protein localises to the chloroplast thylakoid membrane. Functionally, produces ATP from ADP in the presence of a proton gradient across the membrane. The sequence is that of ATP synthase epsilon chain, chloroplastic from Anthoceros angustus (Hornwort).